We begin with the raw amino-acid sequence, 105 residues long: Cell division protein FtsB (105 aa).

Residues 1 to 3 (MRL) lie on the Cytoplasmic side of the membrane. A helical transmembrane segment spans residues 4-21 (FTLILMVVLALVQRQLWF). The Periplasmic segment spans residues 22 to 105 (GKNGLVEYRQ…NKQSSLPKSD (84 aa)). Residues 28-74 (EYRQVSENLLRRQADNQKLQERNMLLKEDIEDLKSGLEAIEELARND) adopt a coiled-coil conformation.

This sequence belongs to the FtsB family. In terms of assembly, part of a complex composed of FtsB, FtsL and FtsQ.

Its subcellular location is the cell inner membrane. In terms of biological role, essential cell division protein. May link together the upstream cell division proteins, which are predominantly cytoplasmic, with the downstream cell division proteins, which are predominantly periplasmic. The sequence is that of Cell division protein FtsB from Tolumonas auensis (strain DSM 9187 / NBRC 110442 / TA 4).